The sequence spans 594 residues: Aspartate--tRNA(Asp/Asn) ligase (594 aa).

E175 contributes to the L-aspartate binding site. Positions 199–202 (QQFK) are aspartate. The L-aspartate site is built by R221 and H455. 221–223 (RDE) contributes to the ATP binding site. E488 contributes to the ATP binding site. R495 provides a ligand contact to L-aspartate. ATP is bound at residue 540 to 543 (GIDR).

The protein belongs to the class-II aminoacyl-tRNA synthetase family. Type 1 subfamily. In terms of assembly, homodimer.

The protein localises to the cytoplasm. The enzyme catalyses tRNA(Asx) + L-aspartate + ATP = L-aspartyl-tRNA(Asx) + AMP + diphosphate. Aspartyl-tRNA synthetase with relaxed tRNA specificity since it is able to aspartylate not only its cognate tRNA(Asp) but also tRNA(Asn). Reaction proceeds in two steps: L-aspartate is first activated by ATP to form Asp-AMP and then transferred to the acceptor end of tRNA(Asp/Asn). The polypeptide is Aspartate--tRNA(Asp/Asn) ligase (Ruegeria sp. (strain TM1040) (Silicibacter sp.)).